Consider the following 1116-residue polypeptide: MSFINNILKVFVGDKSQKDVKAIQPIIAKIRTLENSLSNLSHDELRAKTVYFKDIIKQARAEKDTKIENLKLEVEAIQDIDAREDVYAQIDILEKEAYEISEKTLNEILPEAFAVIKETAKRFKENKQITVTATAKDRELSATKSYINLVGDTAVWANSWSAAGKEITWDMIHYDVQLIGGVVLHQGKISEMQTGEGKTLVATLPLYLNALTGNGVHLVTVNDYLAKRDSAWKAPLFEFHGLMVDCIDLHQPNSDARRKAYDADITYGTNNEFGFDYLRDNMAHSPEDLVQRKHNFAIVDEVDSVLIDDARTPLIISGQVVDGDRHEFTELKPKIENLVNIQRQLANGFLTEAKRLIKEGNTKDGGFQLLRAHRALPKNKALIKFLSEEGIKALLQKTENQYMSDNNREMPKVDEALYFVIEEKNNQVELTDSGIEIMSKDTEDTFFVLPDIGTEIARIEKLNLSTEEQGEQKEKLFQDFSVKSERIHTLTQLLKAYTLFEKDTEYVLMDNKVMIVDEQTGRIMDGRRYSDGLHQAIEAKENVKIEDATQTYATVTLQNYFRMYSKLAGMTGTAVTEAGELWEIYKLDVVEIPTNRGMSRIDKEDLIYRSVREKFNAVIEDVVGLSQSGRPVLIGTTSVEISELLSRMLKMRNIPHNVLNAKMHKQEAQIVEEAGKPGVVTIATNMAGRGTDIKLTAEVKAAGGLAIIGTERHDSRRVDRQLRGRAGRQGDPGSSQFYVSLEDNLMRLFGSDRVAKIMDRMGLQEGEVIQHSMMTKSIERAQKKVEENNFGTRKRLLEYDDVMNSQREVVYKRRRHALHGERLKLDIANMMYDTCEVIVEKNKLTGDFKNFEFELIKNLSITSPVTQADFAKLSDIELTGKTYKAASEYYTEKNIRDAHEAFPIIRNVYENPGNSFERIIVPFTDGIKSLNVVTDLKKAYESQGKQLVADFEKNITLAIVDDAWKKHLRKMDEMKQSVQLAVHEQKDPLLIYKFEAFKLFKNMLDGINKEVISFLFKGDLPQQQNNIQEATQIRQKENYIESKDEILNIEEQAERNHEAGQTQQHQVTETIVRDMPKINRNDTVKIQNVANGQIEELKFKKAEILLNAGTWVLVSE.

ATP contacts are provided by residues glutamine 177, 195–199 (GEGKT), and aspartate 692.

This sequence belongs to the SecA family. Monomer and homodimer. Part of the essential Sec protein translocation apparatus which comprises SecA, SecYEG and auxiliary proteins SecDF. Other proteins may also be involved.

It is found in the cell inner membrane. Its subcellular location is the cytoplasm. The catalysed reaction is ATP + H2O + cellular proteinSide 1 = ADP + phosphate + cellular proteinSide 2.. Functionally, part of the Sec protein translocase complex. Interacts with the SecYEG preprotein conducting channel. Has a central role in coupling the hydrolysis of ATP to the transfer of proteins into and across the cell membrane, serving as an ATP-driven molecular motor driving the stepwise translocation of polypeptide chains across the membrane. In Flavobacterium psychrophilum (strain ATCC 49511 / DSM 21280 / CIP 103535 / JIP02/86), this protein is Protein translocase subunit SecA.